The sequence spans 508 residues: Protein ultraspiracle (508 aa).

Residues 1-103 (MDNCDQDASF…NHPLSGSKHL (103 aa)) form a modulating region. Disordered regions lie at residues 21–40 (PDIS…KAES) and 55–92 (PGSN…QQYP). Residues 24-35 (SQLNDSNNSSFS) show a composition bias toward polar residues. S35 carries the phosphoserine modification. The span at 57 to 90 (SNSASSNNNSAGDAQMAQAPNSAGGSAAAAVQQQ) shows a compositional bias: low complexity. 2 consecutive NR C4-type zinc fingers follow at residues 104 to 124 (CSIC…CEGC) and 140 to 164 (CREN…YQKC). Residues 104-169 (CSICGDRASG…RYQKCLTCGM (66 aa)) constitute a DNA-binding region (nuclear receptor). The hinge stretch occupies residues 170 to 223 (KREAVQEERQRGARNAAGRLSASGGGSSGPGSVGGSSSQGGGGGGGVSGGMGSG). A disordered region spans residues 178–228 (RQRGARNAAGRLSASGGGSSGPGSVGGSSSQGGGGGGGVSGGMGSGNGSDD). A compositionally biased stretch (gly residues) spans 192–224 (SGGGSSGPGSVGGSSSQGGGGGGGVSGGMGSGN). An NR LBD domain is found at 239–498 (SIERIIEAEQ…ELFLEQLEAP (260 aa)).

It belongs to the nuclear hormone receptor family. NR2 subfamily. Heterodimer of USP and ECR. Only the heterodimer is capable of high-affinity binding to ecdysone.

Its subcellular location is the nucleus. Its function is as follows. Receptor for ecdysone. May be an important modulator of insect metamorphosis. Plays an important part in embryonic and post-embryonic development. Binds to ecdysone response elements (ECRES) such as in the promoter region of s15 chorion gene. This Drosophila melanogaster (Fruit fly) protein is Protein ultraspiracle (usp).